Reading from the N-terminus, the 363-residue chain is Phosphoserine aminotransferase (363 aa).

Residue arginine 42 participates in L-glutamate binding. Pyridoxal 5'-phosphate is bound by residues 76–77 (GR), tryptophan 102, threonine 156, aspartate 175, and glutamine 198. At lysine 199 the chain carries N6-(pyridoxal phosphate)lysine. Residue 240 to 241 (NT) participates in pyridoxal 5'-phosphate binding.

It belongs to the class-V pyridoxal-phosphate-dependent aminotransferase family. SerC subfamily. As to quaternary structure, homodimer. Pyridoxal 5'-phosphate is required as a cofactor.

Its subcellular location is the cytoplasm. The enzyme catalyses O-phospho-L-serine + 2-oxoglutarate = 3-phosphooxypyruvate + L-glutamate. The catalysed reaction is 4-(phosphooxy)-L-threonine + 2-oxoglutarate = (R)-3-hydroxy-2-oxo-4-phosphooxybutanoate + L-glutamate. The protein operates within amino-acid biosynthesis; L-serine biosynthesis; L-serine from 3-phospho-D-glycerate: step 2/3. It participates in cofactor biosynthesis; pyridoxine 5'-phosphate biosynthesis; pyridoxine 5'-phosphate from D-erythrose 4-phosphate: step 3/5. Functionally, catalyzes the reversible conversion of 3-phosphohydroxypyruvate to phosphoserine and of 3-hydroxy-2-oxo-4-phosphonooxybutanoate to phosphohydroxythreonine. In Shewanella frigidimarina (strain NCIMB 400), this protein is Phosphoserine aminotransferase.